A 150-amino-acid chain; its full sequence is 3-dehydroquinate dehydratase (150 aa).

The active-site Proton acceptor is the tyrosine 26. 3 residues coordinate substrate: asparagine 77, histidine 83, and aspartate 90. The active-site Proton donor is the histidine 103. Residues 104–105 (LS) and arginine 114 each bind substrate.

It belongs to the type-II 3-dehydroquinase family. As to quaternary structure, homododecamer.

The enzyme catalyses 3-dehydroquinate = 3-dehydroshikimate + H2O. The protein operates within metabolic intermediate biosynthesis; chorismate biosynthesis; chorismate from D-erythrose 4-phosphate and phosphoenolpyruvate: step 3/7. Its function is as follows. Catalyzes a trans-dehydration via an enolate intermediate. This chain is 3-dehydroquinate dehydratase, found in Histophilus somni (strain 129Pt) (Haemophilus somnus).